Consider the following 344-residue polypeptide: Dihydroorotate dehydrogenase (quinone) (344 aa).

Residues 65–69 (AGLDK) and Thr89 contribute to the FMN site. Lys69 lines the substrate pocket. 114–118 (NRMGF) contributes to the substrate binding site. Positions 145 and 178 each coordinate FMN. Position 178 (Asn178) interacts with substrate. Ser181 acts as the Nucleophile in catalysis. Asn183 contributes to the substrate binding site. FMN contacts are provided by Lys223 and Thr251. 252 to 253 (NT) contacts substrate. FMN is bound by residues Gly274, Gly303, and 324-325 (YS).

This sequence belongs to the dihydroorotate dehydrogenase family. Type 2 subfamily. Monomer. FMN is required as a cofactor.

It localises to the cell membrane. It catalyses the reaction (S)-dihydroorotate + a quinone = orotate + a quinol. Its pathway is pyrimidine metabolism; UMP biosynthesis via de novo pathway; orotate from (S)-dihydroorotate (quinone route): step 1/1. Functionally, catalyzes the conversion of dihydroorotate to orotate with quinone as electron acceptor. This is Dihydroorotate dehydrogenase (quinone) from Cupriavidus taiwanensis (strain DSM 17343 / BCRC 17206 / CCUG 44338 / CIP 107171 / LMG 19424 / R1) (Ralstonia taiwanensis (strain LMG 19424)).